A 298-amino-acid polypeptide reads, in one-letter code: Mimecan (298 aa).

A signal peptide spans 1–20; sequence MKTLQSTLLLLLFVPLIKPA. N88 carries N-linked (GlcNAc...) (keratan sulfate) asparagine glycosylation. LRR repeat units lie at residues 112 to 131, 132 to 155, 156 to 179, 180 to 199, 200 to 225, 226 to 246, and 247 to 277; these read DAVP…FNKI, KKLT…GNLI, EDIE…ENQL, LKLP…YNKI, KSRG…HNAL, ESVP…FNNI, and ASIT…GNPI. N-linked (GlcNAc...) (keratan sulfate) asparagine glycosylation occurs at N214. C255 and C288 are oxidised to a cystine. An N-linked (GlcNAc...) (keratan sulfate) asparagine glycan is attached at N258.

It belongs to the small leucine-rich proteoglycan (SLRP) family. SLRP class III subfamily. Contains keratan sulfate.

The protein resides in the secreted. It is found in the extracellular space. The protein localises to the extracellular matrix. Functionally, induces bone formation in conjunction with TGF-beta-1 or TGF-beta-2. The protein is Mimecan (OGN) of Pongo abelii (Sumatran orangutan).